Here is a 124-residue protein sequence, read N- to C-terminus: Small ribosomal subunit protein uS12 (124 aa).

A 3-methylthioaspartic acid modification is found at Asp-89.

The protein belongs to the universal ribosomal protein uS12 family. As to quaternary structure, part of the 30S ribosomal subunit. Contacts proteins S8 and S17. May interact with IF1 in the 30S initiation complex.

Functionally, with S4 and S5 plays an important role in translational accuracy. Interacts with and stabilizes bases of the 16S rRNA that are involved in tRNA selection in the A site and with the mRNA backbone. Located at the interface of the 30S and 50S subunits, it traverses the body of the 30S subunit contacting proteins on the other side and probably holding the rRNA structure together. The combined cluster of proteins S8, S12 and S17 appears to hold together the shoulder and platform of the 30S subunit. This chain is Small ribosomal subunit protein uS12, found in Aeromonas hydrophila subsp. hydrophila (strain ATCC 7966 / DSM 30187 / BCRC 13018 / CCUG 14551 / JCM 1027 / KCTC 2358 / NCIMB 9240 / NCTC 8049).